A 119-amino-acid chain; its full sequence is Large ribosomal subunit protein bL20 (119 aa).

The protein belongs to the bacterial ribosomal protein bL20 family.

Its function is as follows. Binds directly to 23S ribosomal RNA and is necessary for the in vitro assembly process of the 50S ribosomal subunit. It is not involved in the protein synthesizing functions of that subunit. This chain is Large ribosomal subunit protein bL20, found in Dehalococcoides mccartyi (strain ATCC BAA-2266 / KCTC 15142 / 195) (Dehalococcoides ethenogenes (strain 195)).